The chain runs to 177 residues: Large ribosomal subunit protein uL6 (177 aa).

The protein belongs to the universal ribosomal protein uL6 family. As to quaternary structure, part of the 50S ribosomal subunit.

This protein binds to the 23S rRNA, and is important in its secondary structure. It is located near the subunit interface in the base of the L7/L12 stalk, and near the tRNA binding site of the peptidyltransferase center. The protein is Large ribosomal subunit protein uL6 of Rhizobium rhizogenes (strain K84 / ATCC BAA-868) (Agrobacterium radiobacter).